The sequence spans 218 residues: Peptide methionine sulfoxide reductase MsrA (218 aa).

Cysteine 57 is an active-site residue.

It belongs to the MsrA Met sulfoxide reductase family.

It catalyses the reaction L-methionyl-[protein] + [thioredoxin]-disulfide + H2O = L-methionyl-(S)-S-oxide-[protein] + [thioredoxin]-dithiol. It carries out the reaction [thioredoxin]-disulfide + L-methionine + H2O = L-methionine (S)-S-oxide + [thioredoxin]-dithiol. In terms of biological role, has an important function as a repair enzyme for proteins that have been inactivated by oxidation. Catalyzes the reversible oxidation-reduction of methionine sulfoxide in proteins to methionine. The sequence is that of Peptide methionine sulfoxide reductase MsrA from Brucella melitensis biotype 2 (strain ATCC 23457).